The sequence spans 746 residues: WD repeat-containing and planar cell polarity effector protein fritz homolog (746 aa).

WD repeat units lie at residues 326–374 and 375–414; these read IQCV…TLLA and QTEL…INIQ.

This sequence belongs to the WD repeat fritz family. As to quaternary structure, component of the CPLANE (ciliogenesis and planar polarity effectors) complex, composed of INTU, FUZ and WDPCP. Interacts with CPLANE1.

The protein localises to the cell membrane. The protein resides in the cytoplasm. It localises to the cytoskeleton. It is found in the cilium axoneme. Its subcellular location is the cilium basal body. Probable effector of the planar cell polarity signaling pathway which regulates the septin cytoskeleton in both ciliogenesis and collective cell movements. Together with FUZ and WDPCP proposed to function as core component of the CPLANE (ciliogenesis and planar polarity effectors) complex involved in the recruitment of peripheral IFT-A proteins to basal bodies. Binds phosphatidylinositol 3-phosphate with highest affinity, followed by phosphatidylinositol 4-phosphate and phosphatidylinositol 5-phosphate. This Homo sapiens (Human) protein is WD repeat-containing and planar cell polarity effector protein fritz homolog (WDPCP).